We begin with the raw amino-acid sequence, 55 residues long: U2-theraphotoxin-Cg1a (55 aa).

The propeptide occupies 1 to 19 (DSPAWLKSMERIFQSEERE). Cystine bridges form between Cys-20-Cys-34, Cys-27-Cys-39, and Cys-33-Cys-47.

Belongs to the neurotoxin 10 (Hwtx-1) family. 06 (F4b) subfamily. As to expression, expressed by the venom gland.

The protein resides in the secreted. Functionally, probable ion channel inhibitor. This is U2-theraphotoxin-Cg1a from Chilobrachys guangxiensis (Chinese earth tiger tarantula).